Consider the following 312-residue polypeptide: Deoxycytidylate deaminase (312 aa).

The CMP/dCMP-type deaminase domain maps to 162 to 291 (SWDSYFMKLA…RMDEESFKVL (130 aa)). Histidine 233 is a Zn(2+) binding site. Glutamate 235 serves as the catalytic Proton donor. Residues cysteine 260 and cysteine 263 each coordinate Zn(2+).

This sequence belongs to the cytidine and deoxycytidylate deaminase family. Zn(2+) is required as a cofactor.

It carries out the reaction dCMP + H2O + H(+) = dUMP + NH4(+). Its activity is regulated as follows. Allosteric enzyme whose activity is greatly influenced by the end products of its metabolic pathway, dCTP and dTTP. Its function is as follows. Catalyzes the hydrolytic deamination of dCMP to yield dUMP, the nucleotide substrate for thymidylate synthetase. The polypeptide is Deoxycytidylate deaminase (Saccharomyces cerevisiae (strain ATCC 204508 / S288c) (Baker's yeast)).